A 440-amino-acid polypeptide reads, in one-letter code: uncharacterized protein (440 aa).

The N-terminal stretch at 1–19 (MKKLLLAASIVYFASACLA) is a signal peptide.

This is an uncharacterized protein from Rickettsia prowazekii (strain Madrid E).